Here is a 41-residue protein sequence, read N- to C-terminus: Omega-theraphotoxin-Hg1a (41 aa).

Intrachain disulfides connect Cys-7–Cys-21, Cys-14–Cys-26, and Cys-20–Cys-33.

This sequence belongs to the neurotoxin 10 (Hwtx-1) family. 56 (SNX-482) subfamily. Expressed by the venom gland.

It is found in the secreted. Its function is as follows. Toxin that blocks vertebrate P/Q-type (Cav2.1/CACNA1A) and R-type (Cav2.3/CACNA1E) voltage-gated calcium channels. Also inhibits sodium channels (Nav) in bovine chromaffin cells by delaying sodium channel inactivation. This is Omega-theraphotoxin-Hg1a from Hysterocrates gigas (Cameroon red baboon tarantula).